We begin with the raw amino-acid sequence, 386 residues long: Protein-glutamate methylesterase/protein-glutamine glutaminase 3 (386 aa).

The Response regulatory domain occupies 4 to 121; that stretch reads KVLVVDDSGF…SRNPQKVKQL (118 aa). Residue aspartate 55 is modified to 4-aspartylphosphate. Over residues 132 to 194 the composition is skewed to low complexity; that stretch reads SNRRSSGFGS…SHAPAHPTTS (63 aa). Residues 132–197 form a disordered region; sequence SNRRSSGFGS…PAHPTTSGTA (66 aa). Residues 191–383 form the CheB-type methylesterase domain; sequence PTTSGTAKRK…LDDIGRHLVE (193 aa). Residues serine 210, histidine 237, and aspartate 330 contribute to the active site.

This sequence belongs to the CheB family. Phosphorylated by CheA. Phosphorylation of the N-terminal regulatory domain activates the methylesterase activity.

The protein resides in the cytoplasm. It catalyses the reaction [protein]-L-glutamate 5-O-methyl ester + H2O = L-glutamyl-[protein] + methanol + H(+). It carries out the reaction L-glutaminyl-[protein] + H2O = L-glutamyl-[protein] + NH4(+). In terms of biological role, involved in chemotaxis. Part of a chemotaxis signal transduction system that modulates chemotaxis in response to various stimuli. Catalyzes the demethylation of specific methylglutamate residues introduced into the chemoreceptors (methyl-accepting chemotaxis proteins or MCP) by CheR. Also mediates the irreversible deamidation of specific glutamine residues to glutamic acid. The sequence is that of Protein-glutamate methylesterase/protein-glutamine glutaminase 3 from Pseudomonas syringae pv. syringae (strain B728a).